A 670-amino-acid polypeptide reads, in one-letter code: UvrABC system protein B (670 aa).

Residues 51–433 (EGLKKREQFQ…SARIVEQIIR (383 aa)) enclose the Helicase ATP-binding domain. 64–71 (GVTGSGKT) provides a ligand contact to ATP. Residues 117-140 (YYDYYQPESYLPAKDQYIEKDAQI) carry the Beta-hairpin motif. The Helicase C-terminal domain occupies 453-612 (DVMQEIRKIV…IVPKTIRKPI (160 aa)). The UVR domain maps to 631–666 (PNVIIELDAEMREAADRLDFERAIQLRELIKKLEKE).

Belongs to the UvrB family. In terms of assembly, forms a heterotetramer with UvrA during the search for lesions. Interacts with UvrC in an incision complex.

It is found in the cytoplasm. Functionally, the UvrABC repair system catalyzes the recognition and processing of DNA lesions. A damage recognition complex composed of 2 UvrA and 2 UvrB subunits scans DNA for abnormalities. Upon binding of the UvrA(2)B(2) complex to a putative damaged site, the DNA wraps around one UvrB monomer. DNA wrap is dependent on ATP binding by UvrB and probably causes local melting of the DNA helix, facilitating insertion of UvrB beta-hairpin between the DNA strands. Then UvrB probes one DNA strand for the presence of a lesion. If a lesion is found the UvrA subunits dissociate and the UvrB-DNA preincision complex is formed. This complex is subsequently bound by UvrC and the second UvrB is released. If no lesion is found, the DNA wraps around the other UvrB subunit that will check the other stand for damage. The protein is UvrABC system protein B of Methanosarcina acetivorans (strain ATCC 35395 / DSM 2834 / JCM 12185 / C2A).